A 119-amino-acid polypeptide reads, in one-letter code: Large ribosomal subunit protein bL20 (119 aa).

The protein belongs to the bacterial ribosomal protein bL20 family.

Its function is as follows. Binds directly to 23S ribosomal RNA and is necessary for the in vitro assembly process of the 50S ribosomal subunit. It is not involved in the protein synthesizing functions of that subunit. This is Large ribosomal subunit protein bL20 from Anoxybacillus flavithermus (strain DSM 21510 / WK1).